Consider the following 674-residue polypeptide: Amino-acid acetyltransferase, mitochondrial (674 aa).

The transit peptide at 1-50 (MPLVAAMLTRSNGAWKKATSVVQASICRDQQRPNHTTITSVTSVSQRRHF) directs the protein to the mitochondrion. Residues 33–45 (PNHTTITSVTSVS) show a composition bias toward polar residues. Residues 33–74 (PNHTTITSVTSVSQRRHFSSAENGAKPSRSHPSAAEAKQKRE) form a disordered region. The N-acetyltransferase domain occupies 497–665 (GTPRLKLTDT…YEDVCRGVVP (169 aa)).

It belongs to the acetyltransferase family.

Its subcellular location is the mitochondrion. The catalysed reaction is L-glutamate + acetyl-CoA = N-acetyl-L-glutamate + CoA + H(+). The protein operates within amino-acid biosynthesis; L-arginine biosynthesis; N(2)-acetyl-L-ornithine from L-glutamate: step 1/4. Functionally, N-acetylglutamate synthase involved in arginine biosynthesis. This Podospora anserina (strain S / ATCC MYA-4624 / DSM 980 / FGSC 10383) (Pleurage anserina) protein is Amino-acid acetyltransferase, mitochondrial (ARG2).